The primary structure comprises 275 residues: Large ribosomal subunit protein uL2 (275 aa).

Over residues 28 to 38 (RPYDGLLEKKS) the composition is skewed to basic and acidic residues. 2 disordered regions span residues 28 to 58 (RPYDGLLEKKSKSGGRNNNGRITTRHVGGGH) and 223 to 275 (VAMN…RKAK). Residues 254-275 (KGHKTRKNKRTDKLIVRRRKAK) are compositionally biased toward basic residues.

It belongs to the universal ribosomal protein uL2 family. Part of the 50S ribosomal subunit. Forms a bridge to the 30S subunit in the 70S ribosome.

One of the primary rRNA binding proteins. Required for association of the 30S and 50S subunits to form the 70S ribosome, for tRNA binding and peptide bond formation. It has been suggested to have peptidyltransferase activity; this is somewhat controversial. Makes several contacts with the 16S rRNA in the 70S ribosome. The protein is Large ribosomal subunit protein uL2 of Chromohalobacter salexigens (strain ATCC BAA-138 / DSM 3043 / CIP 106854 / NCIMB 13768 / 1H11).